The sequence spans 409 residues: NADH-quinone oxidoreductase subunit D (409 aa).

The protein belongs to the complex I 49 kDa subunit family. As to quaternary structure, NDH-1 is composed of 14 different subunits. Subunits NuoB, C, D, E, F, and G constitute the peripheral sector of the complex.

The protein localises to the cell inner membrane. The catalysed reaction is a quinone + NADH + 5 H(+)(in) = a quinol + NAD(+) + 4 H(+)(out). In terms of biological role, NDH-1 shuttles electrons from NADH, via FMN and iron-sulfur (Fe-S) centers, to quinones in the respiratory chain. The immediate electron acceptor for the enzyme in this species is believed to be ubiquinone. Couples the redox reaction to proton translocation (for every two electrons transferred, four hydrogen ions are translocated across the cytoplasmic membrane), and thus conserves the redox energy in a proton gradient. The protein is NADH-quinone oxidoreductase subunit D of Helicobacter pylori (strain Shi470).